The chain runs to 112 residues: T cell receptor alpha variable 21 (112 aa).

The N-terminal stretch at 1-19 (METLLGLLILWLQLQWVSS) is a signal peptide. Positions 21 to 112 (QEVTQIPAAL…DSATYLCAVR (92 aa)) constitute an Ig-like domain. N-linked (GlcNAc...) asparagine glycosylation is found at Asn41 and Asn82. Residues Cys42 and Cys109 are joined by a disulfide bond.

Alpha-beta TR is a heterodimer composed of an alpha and beta chain; disulfide-linked. The alpha-beta TR is associated with the transmembrane signaling CD3 coreceptor proteins to form the TR-CD3 (TcR or TCR). The assembly of alpha-beta TR heterodimers with CD3 occurs in the endoplasmic reticulum where a single alpha-beta TR heterodimer associates with one CD3D-CD3E heterodimer, one CD3G-CD3E heterodimer and one CD247 homodimer forming a stable octameric structure. CD3D-CD3E and CD3G-CD3E heterodimers preferentially associate with TR alpha and TR beta chains, respectively. The association of the CD247 homodimer is the last step of TcR assembly in the endoplasmic reticulum and is required for transport to the cell surface.

The protein resides in the cell membrane. V region of the variable domain of T cell receptor (TR) alpha chain that participates in the antigen recognition. Alpha-beta T cell receptors are antigen specific receptors which are essential to the immune response and are present on the cell surface of T lymphocytes. Recognize peptide-major histocompatibility (MH) (pMH) complexes that are displayed by antigen presenting cells (APC), a prerequisite for efficient T cell adaptive immunity against pathogens. Binding of alpha-beta TR to pMH complex initiates TR-CD3 clustering on the cell surface and intracellular activation of LCK that phosphorylates the ITAM motifs of CD3G, CD3D, CD3E and CD247 enabling the recruitment of ZAP70. In turn ZAP70 phosphorylates LAT, which recruits numerous signaling molecules to form the LAT signalosome. The LAT signalosome propagates signal branching to three major signaling pathways, the calcium, the mitogen-activated protein kinase (MAPK) kinase and the nuclear factor NF-kappa-B (NF-kB) pathways, leading to the mobilization of transcription factors that are critical for gene expression and essential for T cell growth and differentiation. The T cell repertoire is generated in the thymus, by V-(D)-J rearrangement. This repertoire is then shaped by intrathymic selection events to generate a peripheral T cell pool of self-MH restricted, non-autoaggressive T cells. Post-thymic interaction of alpha-beta TR with the pMH complexes shapes TR structural and functional avidity. This Homo sapiens (Human) protein is T cell receptor alpha variable 21.